The following is a 184-amino-acid chain: Peptidyl-tRNA hydrolase (184 aa).

Tyr-14 serves as a coordination point for tRNA. Residue His-19 is the Proton acceptor of the active site. Residues Phe-64, Asn-66, and Asn-112 each coordinate tRNA.

Belongs to the PTH family. As to quaternary structure, monomer.

The protein resides in the cytoplasm. It carries out the reaction an N-acyl-L-alpha-aminoacyl-tRNA + H2O = an N-acyl-L-amino acid + a tRNA + H(+). In terms of biological role, hydrolyzes ribosome-free peptidyl-tRNAs (with 1 or more amino acids incorporated), which drop off the ribosome during protein synthesis, or as a result of ribosome stalling. Functionally, catalyzes the release of premature peptidyl moieties from peptidyl-tRNA molecules trapped in stalled 50S ribosomal subunits, and thus maintains levels of free tRNAs and 50S ribosomes. The protein is Peptidyl-tRNA hydrolase of Thermoanaerobacter sp. (strain X514).